A 266-amino-acid polypeptide reads, in one-letter code: Glutamate racemase (266 aa).

Substrate contacts are provided by residues 9-10 and 41-42; these read DS and YG. Cys-72 functions as the Proton donor/acceptor in the catalytic mechanism. 73 to 74 is a binding site for substrate; that stretch reads NT. Cys-183 functions as the Proton donor/acceptor in the catalytic mechanism. 184–185 is a binding site for substrate; sequence TH.

The protein belongs to the aspartate/glutamate racemases family.

The enzyme catalyses L-glutamate = D-glutamate. The protein operates within cell wall biogenesis; peptidoglycan biosynthesis. Provides the (R)-glutamate required for cell wall biosynthesis. The protein is Glutamate racemase of Listeria monocytogenes serotype 4a (strain HCC23).